The sequence spans 177 residues: ATP synthase subunit delta (177 aa).

It belongs to the ATPase delta chain family. As to quaternary structure, F-type ATPases have 2 components, F(1) - the catalytic core - and F(0) - the membrane proton channel. F(1) has five subunits: alpha(3), beta(3), gamma(1), delta(1), epsilon(1). F(0) has three main subunits: a(1), b(2) and c(10-14). The alpha and beta chains form an alternating ring which encloses part of the gamma chain. F(1) is attached to F(0) by a central stalk formed by the gamma and epsilon chains, while a peripheral stalk is formed by the delta and b chains.

The protein resides in the cell inner membrane. In terms of biological role, f(1)F(0) ATP synthase produces ATP from ADP in the presence of a proton or sodium gradient. F-type ATPases consist of two structural domains, F(1) containing the extramembraneous catalytic core and F(0) containing the membrane proton channel, linked together by a central stalk and a peripheral stalk. During catalysis, ATP synthesis in the catalytic domain of F(1) is coupled via a rotary mechanism of the central stalk subunits to proton translocation. Functionally, this protein is part of the stalk that links CF(0) to CF(1). It either transmits conformational changes from CF(0) to CF(1) or is implicated in proton conduction. In Erwinia tasmaniensis (strain DSM 17950 / CFBP 7177 / CIP 109463 / NCPPB 4357 / Et1/99), this protein is ATP synthase subunit delta.